Consider the following 285-residue polypeptide: Bifunctional protein FolD (285 aa).

NADP(+)-binding positions include 163 to 165 (GRS) and Ser-188.

The protein belongs to the tetrahydrofolate dehydrogenase/cyclohydrolase family. In terms of assembly, homodimer.

The enzyme catalyses (6R)-5,10-methylene-5,6,7,8-tetrahydrofolate + NADP(+) = (6R)-5,10-methenyltetrahydrofolate + NADPH. It catalyses the reaction (6R)-5,10-methenyltetrahydrofolate + H2O = (6R)-10-formyltetrahydrofolate + H(+). Its pathway is one-carbon metabolism; tetrahydrofolate interconversion. Catalyzes the oxidation of 5,10-methylenetetrahydrofolate to 5,10-methenyltetrahydrofolate and then the hydrolysis of 5,10-methenyltetrahydrofolate to 10-formyltetrahydrofolate. This chain is Bifunctional protein FolD, found in Lactococcus lactis subsp. cremoris (strain MG1363).